The chain runs to 593 residues: La-related protein 7 (593 aa).

The segment covering 1 to 11 has biased composition (polar residues); the sequence is MTAIETDTPSN. Residues 1–28 are disordered; it reads MTAIETDTPSNKVKEDESTDLRKDREKK. The segment covering 12–24 has biased composition (basic and acidic residues); it reads KVKEDESTDLRKD. The HTH La-type RNA-binding domain occupies 30-121; sequence RSRVKQLLAD…RRRFPLGEKP (92 aa). The RRM domain occupies 127 to 205; the sequence is RTVYVELLPK…PRKAGMFPKT (79 aa). The disordered stretch occupies residues 191–363; sequence PPEEAPRKAG…STEEEKDAVD (173 aa). The span at 231–240 shows a compositional bias: basic residues; sequence KKKKKKKSKA. Residues 248-259 are compositionally biased toward acidic residues; that stretch reads AEEDTKEQDMDI. 3 stretches are compositionally biased toward basic and acidic residues: residues 295–307, 314–340, and 348–363; these read ERAE…EKVR, SSSE…DEKP, and QECK…DAVD. The xRRM domain maps to 461-574; sequence QFVCGVIGKI…TEKLIAKAEK (114 aa).

The protein belongs to the LARP7 family. Core component of the 7SK RNP complex. Associates with box C/D small nucleolar ribonucleoprotein (snoRNP) complexes.

The protein resides in the nucleus. It is found in the nucleoplasm. Its function is as follows. RNA-binding protein that specifically binds distinct small nuclear RNA (snRNAs) and regulates their processing and function. Specifically binds the 7SK snRNA (7SK RNA) and acts as a core component of the 7SK ribonucleoprotein (RNP) complex, thereby acting as a negative regulator of transcription elongation by RNA polymerase II. The 7SK RNP complex sequesters the positive transcription elongation factor b (P-TEFb) in a large inactive 7SK RNP complex preventing RNA polymerase II phosphorylation and subsequent transcriptional elongation. The 7SK RNP complex also promotes snRNA gene transcription by RNA polymerase II via interaction with the little elongation complex (LEC). LARP7 specifically binds to the highly conserved 3'-terminal U-rich stretch of 7SK RNA; on stimulation, remains associated with 7SK RNA, whereas P-TEFb is released from the complex. LARP7 also acts as a regulator of mRNA splicing fidelity by promoting U6 snRNA processing. Specifically binds U6 snRNAs and associates with a subset of box C/D RNP complexes: promotes U6 snRNA 2'-O-methylation by facilitating U6 snRNA loading into box C/D RNP complexes. U6 snRNA 2'-O-methylation is required for mRNA splicing fidelity. In Xenopus tropicalis (Western clawed frog), this protein is La-related protein 7.